Reading from the N-terminus, the 120-residue chain is Large ribosomal subunit protein uL24 (120 aa).

The disordered stretch occupies residues 1–26 (MVRVISSQPRKQRKARYNAPHHMRGS). Positions 10–24 (RKQRKARYNAPHHMR) are enriched in basic residues.

Belongs to the universal ribosomal protein uL24 family. In terms of assembly, part of the 50S ribosomal subunit.

In terms of biological role, one of two assembly initiator proteins, it binds directly to the 5'-end of the 23S rRNA, where it nucleates assembly of the 50S subunit. Functionally, located at the polypeptide exit tunnel on the outside of the subunit. This chain is Large ribosomal subunit protein uL24, found in Methanospirillum hungatei JF-1 (strain ATCC 27890 / DSM 864 / NBRC 100397 / JF-1).